A 234-amino-acid chain; its full sequence is GTP cyclohydrolase 1 (234 aa).

Residues 1-26 are disordered; the sequence is MDALIKPLRAGKPDAKPADPKGTEFR. Positions 11 to 26 are enriched in basic and acidic residues; sequence GKPDAKPADPKGTEFR. The Zn(2+) site is built by cysteine 123, histidine 126, and cysteine 194.

This sequence belongs to the GTP cyclohydrolase I family. In terms of assembly, toroid-shaped homodecamer, composed of two pentamers of five dimers.

The catalysed reaction is GTP + H2O = 7,8-dihydroneopterin 3'-triphosphate + formate + H(+). Its pathway is cofactor biosynthesis; 7,8-dihydroneopterin triphosphate biosynthesis; 7,8-dihydroneopterin triphosphate from GTP: step 1/1. The polypeptide is GTP cyclohydrolase 1 (Rhodopseudomonas palustris (strain BisB18)).